A 338-amino-acid polypeptide reads, in one-letter code: L-serine dehydratase (338 aa).

Lys-39 carries the N6-(pyridoxal phosphate)lysine modification.

This sequence belongs to the serine/threonine dehydratase family. It depends on pyridoxal 5'-phosphate as a cofactor.

It localises to the cytoplasm. The catalysed reaction is L-serine = pyruvate + NH4(+). It functions in the pathway carbohydrate biosynthesis; gluconeogenesis. This chain is L-serine dehydratase (SDL1), found in Saccharomyces cerevisiae (strain RM11-1a) (Baker's yeast).